Reading from the N-terminus, the 347-residue chain is NADH-ubiquinone oxidoreductase chain 2 (347 aa).

Transmembrane regions (helical) follow at residues 13-33 (IVLG…WMGF), 59-79 (YFLT…INLV), 96-116 (IIMT…FWVP), 122-142 (ISLL…LSVL), 144-164 (VISP…SILI), 178-200 (ILAY…NPMM), 210-232 (LMTA…ALSH), 246-266 (IIML…KWMI), 276-296 (IILA…YMRL), and 326-346 (LPML…MILL).

This sequence belongs to the complex I subunit 2 family. Core subunit of respiratory chain NADH dehydrogenase (Complex I) which is composed of 45 different subunits. Interacts with TMEM242.

It is found in the mitochondrion inner membrane. It carries out the reaction a ubiquinone + NADH + 5 H(+)(in) = a ubiquinol + NAD(+) + 4 H(+)(out). Functionally, core subunit of the mitochondrial membrane respiratory chain NADH dehydrogenase (Complex I) which catalyzes electron transfer from NADH through the respiratory chain, using ubiquinone as an electron acceptor. Essential for the catalytic activity and assembly of complex I. The protein is NADH-ubiquinone oxidoreductase chain 2 of Rhynchonycteris naso (Brazilian long-nosed bat).